Here is an 82-residue protein sequence, read N- to C-terminus: MLNINKEIAQIETELNELKKLRDEISERIEKLEIKLLKLKALAIPEEEFEEDYEEIIEDVKKSLDKKETVPAEEALKELGLL.

In terms of biological role, antitoxin component of a type II toxin-antitoxin (TA) system. Its cognate toxin is RelE1 (Potential). The sequence is that of Putative antitoxin RelB1 (relB1) from Methanocaldococcus jannaschii (strain ATCC 43067 / DSM 2661 / JAL-1 / JCM 10045 / NBRC 100440) (Methanococcus jannaschii).